Reading from the N-terminus, the 86-residue chain is Cerebrin prohormone (86 aa).

The N-terminal stretch at 1 to 27 (MFGYRSLLVLLVTLSLCLLLQSSHCSA) is a signal peptide. The propeptide occupies 28–64 (VRTYGNDLDARARREIISLAARLIKLSMYGPEDDSFV). The residue at position 83 (isoleucine 83) is an Isoleucine amide.

As to expression, expressed only in cerebral ganglion.

It localises to the secreted. Its function is as follows. May function as a hormone and may play a neuromodulatory role. This is Cerebrin prohormone (CBPH) from Aplysia californica (California sea hare).